The primary structure comprises 427 residues: Enolase (427 aa).

(2R)-2-phosphoglycerate is bound at residue glutamine 163. Glutamate 205 acts as the Proton donor in catalysis. Positions 242, 285, and 312 each coordinate Mg(2+). Positions 337, 366, 367, and 388 each coordinate (2R)-2-phosphoglycerate. Residue lysine 337 is the Proton acceptor of the active site.

Belongs to the enolase family. Mg(2+) serves as cofactor.

Its subcellular location is the cytoplasm. It localises to the secreted. The protein resides in the cell surface. The catalysed reaction is (2R)-2-phosphoglycerate = phosphoenolpyruvate + H2O. It functions in the pathway carbohydrate degradation; glycolysis; pyruvate from D-glyceraldehyde 3-phosphate: step 4/5. Its function is as follows. Catalyzes the reversible conversion of 2-phosphoglycerate (2-PG) into phosphoenolpyruvate (PEP). It is essential for the degradation of carbohydrates via glycolysis. This is Enolase from Bradyrhizobium sp. (strain BTAi1 / ATCC BAA-1182).